Consider the following 582-residue polypeptide: Type I secretion system ATP-binding protein PrsD (582 aa).

3 helical membrane passes run 22–42 (FIGV…GSFF), 59–79 (LIAL…FELI), and 148–168 (IAIC…GGLI). The ABC transmembrane type-1 domain occupies 22–301 (FIGVGVASAL…AIGNWRGLVA (280 aa)). Residues 332 to 568 (LTVEGLASGP…VLRPQQVERQ (237 aa)) enclose the ABC transporter domain. 366-373 (GPSASGKS) contributes to the ATP binding site.

It belongs to the ABC transporter superfamily. Part of a type I secretion system composed of PrsD and PrsE.

Its subcellular location is the cell inner membrane. Its function is as follows. Mediates secretion of glycanase ExsH. The polypeptide is Type I secretion system ATP-binding protein PrsD (prsD) (Rhizobium meliloti (strain 1021) (Ensifer meliloti)).